A 256-amino-acid chain; its full sequence is Flap endonuclease Xni (256 aa).

Position 105 (D105) interacts with Mg(2+). Residues 163–256 (RSQLIDYLAL…QFRIKKPDSE (94 aa)) form the 5'-3' exonuclease domain. L172, A173, P181, V183, and I186 together coordinate K(+). The tract at residues 185–190 (GIGPKS) is interaction with DNA.

This sequence belongs to the Xni family. It depends on Mg(2+) as a cofactor. K(+) is required as a cofactor.

Its function is as follows. Has flap endonuclease activity. During DNA replication, flap endonucleases cleave the 5'-overhanging flap structure that is generated by displacement synthesis when DNA polymerase encounters the 5'-end of a downstream Okazaki fragment. The protein is Flap endonuclease Xni of Shewanella pealeana (strain ATCC 700345 / ANG-SQ1).